The chain runs to 353 residues: Ribosome biogenesis protein BRX1 homolog (353 aa).

The segment covering methionine 1–glycine 10 has biased composition (basic residues). The interval methionine 1–arginine 46 is disordered. Residues asparagine 22–alanine 36 are compositionally biased toward basic and acidic residues. Positions glutamate 60–glycine 249 constitute a Brix domain. Residue lysine 160 forms a Glycyl lysine isopeptide (Lys-Gly) (interchain with G-Cter in SUMO2) linkage. Serine 261 carries the phosphoserine modification. Lysine 276 is modified (N6-acetyllysine). Residues lysine 314 and lysine 322 each participate in a glycyl lysine isopeptide (Lys-Gly) (interchain with G-Cter in SUMO2) cross-link.

Belongs to the BRX1 family.

Its subcellular location is the nucleus. It is found in the nucleolus. In terms of biological role, required for biogenesis of the 60S ribosomal subunit. In Pongo abelii (Sumatran orangutan), this protein is Ribosome biogenesis protein BRX1 homolog (BRIX1).